The primary structure comprises 431 residues: Trigger factor (431 aa).

Positions 163-248 constitute a PPIase FKBP-type domain; that stretch reads GDTVVIDYAG…IHEVKGKELP (86 aa).

It belongs to the FKBP-type PPIase family. Tig subfamily.

The protein resides in the cytoplasm. It carries out the reaction [protein]-peptidylproline (omega=180) = [protein]-peptidylproline (omega=0). In terms of biological role, involved in protein export. Acts as a chaperone by maintaining the newly synthesized protein in an open conformation. Functions as a peptidyl-prolyl cis-trans isomerase. The polypeptide is Trigger factor (Latilactobacillus sakei subsp. sakei (strain 23K) (Lactobacillus sakei subsp. sakei)).